Consider the following 225-residue polypeptide: tRNA (guanine-N(1)-)-methyltransferase (225 aa).

S-adenosyl-L-methionine-binding positions include glycine 112 and 132–137; that span reads IGDYVL.

The protein belongs to the RNA methyltransferase TrmD family. Homodimer.

The protein localises to the cytoplasm. The catalysed reaction is guanosine(37) in tRNA + S-adenosyl-L-methionine = N(1)-methylguanosine(37) in tRNA + S-adenosyl-L-homocysteine + H(+). Its function is as follows. Specifically methylates guanosine-37 in various tRNAs. This Porphyromonas gingivalis (strain ATCC 33277 / DSM 20709 / CIP 103683 / JCM 12257 / NCTC 11834 / 2561) protein is tRNA (guanine-N(1)-)-methyltransferase.